Here is a 233-residue protein sequence, read N- to C-terminus: MSNNQSRYENRDKRRKANLVLNILIAIVSILIVVVAANLFINSPSSKDVSKDSETAQKQESPASGKTEKKSDEDIKDSKKDTSDSEKDSEKSSDSDSKKDDSSSKKDDSDSDSSSDSAGDGLKDAKVTEGGSSSDVEKTYENPDWKAVGTEQTGEHAATYDSSSQDWAEMLKAISYATGVSTDNMTVLWLGNNGSPQDAKGKILDKATGNKYQVTITWVDEKGWKPTKVEKLK.

A helical membrane pass occupies residues 21-41 (LNILIAIVSILIVVVAANLFI). Positions 44–163 (PSSKDVSKDS…GEHAATYDSS (120 aa)) are disordered. 3 stretches are compositionally biased toward basic and acidic residues: residues 48 to 57 (DVSKDSETAQ), 66 to 108 (KTEK…KKDD), and 135 to 144 (DVEKTYENPD).

It is found in the cell membrane. This is an uncharacterized protein from Bacillus subtilis (strain 168).